The primary structure comprises 189 residues: MATFSTNEFRGGLKIMLDGDPYTIVENEFVKPGKGQAFNRTKVRNLKTGRVLERTFKSGESVEAADVLEMNMQYLYKDEDNWYFMNPETFEQLPAAQAAVADAEKWLLEQDECTVVLWNNNIISVTPPNFVERKIVDTDPGLRGDTSGGGGKPATLETGAVVRVPLFLNIGDTIKVDTRSGEYLGRAKE.

Residue Lys-34 is modified to N6-(3,6-diaminohexanoyl)-5-hydroxylysine.

It belongs to the elongation factor P family. May be beta-lysylated on the epsilon-amino group of Lys-34 by the combined action of EpmA and EpmB, and then hydroxylated on the C5 position of the same residue by EpmC (if this protein is present). Lysylation is critical for the stimulatory effect of EF-P on peptide-bond formation. The lysylation moiety may extend toward the peptidyltransferase center and stabilize the terminal 3-CCA end of the tRNA. Hydroxylation of the C5 position on Lys-34 may allow additional potential stabilizing hydrogen-bond interactions with the P-tRNA.

It localises to the cytoplasm. It participates in protein biosynthesis; polypeptide chain elongation. Involved in peptide bond synthesis. Alleviates ribosome stalling that occurs when 3 or more consecutive Pro residues or the sequence PPG is present in a protein, possibly by augmenting the peptidyl transferase activity of the ribosome. Modification of Lys-34 is required for alleviation. This is Elongation factor P from Dichelobacter nodosus (strain VCS1703A).